A 528-amino-acid polypeptide reads, in one-letter code: Chaperonin GroEL, chloroplastic (528 aa).

ATP-binding positions include 29-32, 86-90, glycine 415, 481-483, and aspartate 497; these read TLGP, DGTTT, and NAA.

The protein belongs to the chaperonin (HSP60) family. As to quaternary structure, forms a cylinder of 14 subunits composed of two heptameric rings stacked back-to-back. Interacts with the co-chaperonin GroES.

It is found in the plastid. The protein localises to the chloroplast. It catalyses the reaction ATP + H2O + a folded polypeptide = ADP + phosphate + an unfolded polypeptide.. Its function is as follows. Together with its co-chaperonin GroES, plays an essential role in assisting protein folding. The GroEL-GroES system forms a nano-cage that allows encapsulation of the non-native substrate proteins and provides a physical environment optimized to promote and accelerate protein folding. The chain is Chaperonin GroEL, chloroplastic from Trieres chinensis (Marine centric diatom).